Consider the following 550-residue polypeptide: MTETHNDPEELARRVASLSAQNERLAQILVEARSKIVGLQQQIDDLAQPPSTYATFIRSYSDGTADVMVQGRKMRLTSLPAAMVSTARPGQQVRLNEAMAIVETMTYDHTGELVTVKELIGTHRAMVVGRGDDERVVNLAGSLIGRDGPTIRTGDSVLVDLKAGYALEKIDKSEVEELVLEEVPRVAYEDIGGLSRQIDTIKDAVELPFLHPDLYREHGLKAPKGILLYGPPGCGKTLIAKAVAHSLAQTVGQGNNTPTDDTRGYFLNIKGPELLNKYVGETERQIRLIFTRARDKAAQGHPVVVFFDEMESLFRTRGTGLSSDVETTIVPQLLAEIDGVERLDNVIVIGASNREDMIDPAILRPGRLDVKIKIERPDAEAALDIFSKYLTPDLPIHPVDLAEHGGNAQDAVTAMGQRVVEHMYATTPDNQFLEVTYASGDKETLYFKDFSSGAMIQNIVDRAKKAAIKGYLSHGTRGLQVEHLLAACDDEFQENEDLPNTTNPDDWARISGKKGERIVFIRTIVQRKGEGKNPTPAKAIETPHNTGPYL.

Positions 9 to 48 form a coiled coil; sequence EELARRVASLSAQNERLAQILVEARSKIVGLQQQIDDLAQ. 233-238 lines the ATP pocket; sequence GCGKTL. The disordered stretch occupies residues 528-550; that stretch reads KGEGKNPTPAKAIETPHNTGPYL. Residues 549–550 are docks into pockets in the proteasome alpha-ring; it reads YL.

Belongs to the AAA ATPase family. As to quaternary structure, homohexamer. Assembles into a hexameric ring structure that caps the 20S proteasome core. Strongly interacts with the prokaryotic ubiquitin-like protein Pup through a hydrophobic interface; the interacting region of ARC lies in its N-terminal coiled-coil domain. There is one Pup binding site per ARC hexamer ring. Upon ATP-binding, the C-terminus of ARC interacts with the alpha-rings of the proteasome core, possibly by binding to the intersubunit pockets.

Its pathway is protein degradation; proteasomal Pup-dependent pathway. Functionally, ATPase which is responsible for recognizing, binding, unfolding and translocation of pupylated proteins into the bacterial 20S proteasome core particle. May be essential for opening the gate of the 20S proteasome via an interaction with its C-terminus, thereby allowing substrate entry and access to the site of proteolysis. Thus, the C-termini of the proteasomal ATPase may function like a 'key in a lock' to induce gate opening and therefore regulate proteolysis. This chain is Proteasome-associated ATPase, found in Jonesia denitrificans (strain ATCC 14870 / DSM 20603 / BCRC 15368 / CIP 55.134 / JCM 11481 / NBRC 15587 / NCTC 10816 / Prevot 55134) (Listeria denitrificans).